The sequence spans 138 residues: Putative esterase HI_1161 (138 aa).

This sequence belongs to the thioesterase PaaI family.

The sequence is that of Putative esterase HI_1161 from Haemophilus influenzae (strain ATCC 51907 / DSM 11121 / KW20 / Rd).